The chain runs to 394 residues: GTPase Era, mitochondrial (394 aa).

An Era-type G domain is found at 32–280 (KCLQLAVIGA…RDHLMSISPQ (249 aa)). The interval 40–47 (GAPNVGKS) is G1. 40 to 47 (GAPNVGKS) contributes to the GTP binding site. The interval 66–70 (DTTTR) is G2. The G3 stretch occupies residues 87–90 (DSPG). GTP is bound by residues 87-91 (DSPGA) and 160-163 (NKID). The segment at 160 to 163 (NKID) is G4. A G5 region spans residues 259-261 (VSS).

Belongs to the TRAFAC class TrmE-Era-EngA-EngB-Septin-like GTPase superfamily. Era GTPase family.

The protein localises to the mitochondrion matrix. It is found in the mitochondrion inner membrane. Functionally, probable GTPase that plays a role in the mitochondrial ribosomal small subunit assembly. Specifically binds the 12S mitochondrial rRNA (12S mt-rRNA) to a 33 nucleotide section delineating the 3' terminal stem-loop region. May act as a chaperone that protects the 12S mt-rRNA on the 28S mitoribosomal subunit during ribosomal small subunit assembly. May play a role in positively regulating mitochondrial function. Plays a role in fertility. The protein is GTPase Era, mitochondrial of Caenorhabditis elegans.